The chain runs to 164 residues: Interferon gamma (164 aa).

Residues 1–19 (MTCQTYNLFVLSVIMIYYG) form the signal peptide. Asparagine 42 and asparagine 61 each carry an N-linked (GlcNAc...) asparagine glycan.

This sequence belongs to the type II (or gamma) interferon family. As to quaternary structure, homodimer.

The protein localises to the secreted. Functionally, produced by lymphocytes activated by specific antigens or mitogens. IFN-gamma, in addition to having antiviral activity, has important immunoregulatory functions. It is a potent activator of macrophages, it has antiproliferative effects on transformed cells and it can potentiate the antiviral and antitumor effects of the type I interferons. The chain is Interferon gamma (IFNG) from Phasianus colchicus colchicus (Black-necked pheasant).